The chain runs to 427 residues: MAERFDVIVVGAGMAGNAAAYTLAKGGLKVLQIERGETPGSKNVQGAILYADAIEKIIPDFRDDAPLERHLIEQRVWVMDDASYGYHYRSEDFNKPPYNRYTIIRVHFDQWFNKKAREAGVLTICETRHDLLIEGGKVVGVRTDRQGGEVRADAVILADGVNSRLAVKAGFSRDQPENWALAVKEIHFLPQETMEARFNIGEEEAAIEMAGKIDAGMMGTGFLYTNKESITLGVGCMLSDFKQQKISPYELLDRMKTHPSIAPLIAGSDMKEYAAHLIPEGGYNAIPQVYGDGWMIAGDAPIRHGIHREGSNLAMTTGMLAAQTLVELRAADKPFSAANLAEYKKKLDDSFVMKDLKKYRRMPEIFHKNKQFFTTYPDLLSRAAQTLIRVDGVDKKTKEKEIKKSFIGLRSLFGLIGDAFKFWRAVE.

The protein belongs to the ETF-QO/FixC family. The cofactor is FAD.

Functionally, could be required for the formation of a functional nitrogenase Fe protein. Probably accepts electrons from FixA/FixB and reduces a quinone. This Azotobacter vinelandii protein is Protein FixC (fixC).